We begin with the raw amino-acid sequence, 171 residues long: Flavodoxin (171 aa).

Positions 4-166 (IGLFVGTTTG…RIKEWVKQLK (163 aa)) constitute a Flavodoxin-like domain.

Belongs to the flavodoxin family. FMN serves as cofactor.

Low-potential electron donor to a number of redox enzymes. In Trichodesmium erythraeum (strain IMS101), this protein is Flavodoxin (fld).